The sequence spans 140 residues: MTQPDIEIVIKEDFTYRECSDVANDVFKKTQWLLYVFLFIIFANCVVDVKYYFEGFSHSLLFVYFFLTLIILLVSFMGFHYLNSIPKPEAEPDYRKKQESKNQDFLKSQSNEPLEYASSSAVELEKEKNTREGLTILESS.

2 consecutive transmembrane segments (helical) span residues 33 to 53 and 59 to 79; these read LLYV…KYYF and SLLF…FMGF. Basic and acidic residues predominate over residues 89-104; that stretch reads EAEPDYRKKQESKNQD. The interval 89–140 is disordered; it reads EAEPDYRKKQESKNQDFLKSQSNEPLEYASSSAVELEKEKNTREGLTILESS. The span at 105–121 shows a compositional bias: polar residues; that stretch reads FLKSQSNEPLEYASSSA.

The protein resides in the membrane. This is an uncharacterized protein from Schizosaccharomyces pombe (strain 972 / ATCC 24843) (Fission yeast).